The sequence spans 256 residues: Trans-aconitate 2-methyltransferase (256 aa).

This sequence belongs to the methyltransferase superfamily. Tam family.

Its subcellular location is the cytoplasm. The catalysed reaction is trans-aconitate + S-adenosyl-L-methionine = (E)-3-(methoxycarbonyl)pent-2-enedioate + S-adenosyl-L-homocysteine. Catalyzes the S-adenosylmethionine monomethyl esterification of trans-aconitate. This is Trans-aconitate 2-methyltransferase from Rhizobium etli (strain ATCC 51251 / DSM 11541 / JCM 21823 / NBRC 15573 / CFN 42).